The following is a 101-amino-acid chain: uncharacterized protein (101 aa).

This is an uncharacterized protein from Encephalitozoon cuniculi (strain GB-M1) (Microsporidian parasite).